The sequence spans 564 residues: Phosphoinositide phospholipase C 3 (564 aa).

The region spanning 19–54 (TRQPPVSIKRLFEAYSRNGKMSFDELLRFVSEVQGE) is the EF-hand domain. The 145-residue stretch at 106-250 (HDMKAPLSHY…LKGKILISTK (145 aa)) folds into the PI-PLC X-box domain. Catalysis depends on residues His121 and His167. In terms of domain architecture, PI-PLC Y-box spans 296–412 (RDLIAIHAAN…GYVKKPRILL (117 aa)). Residues 406–539 (KKPRILLDEH…KSGVRAVRLH (134 aa)) form the C2 domain. Residues Asp450, Asp456, Asp509, Asp511, and Asp517 each coordinate Ca(2+).

Requires Ca(2+) as cofactor. Expressed in leaves, roots and siliques, but not in flowers.

The protein resides in the cell membrane. The enzyme catalyses a 1,2-diacyl-sn-glycero-3-phospho-(1D-myo-inositol-4,5-bisphosphate) + H2O = 1D-myo-inositol 1,4,5-trisphosphate + a 1,2-diacyl-sn-glycerol + H(+). In terms of biological role, the production of the second messenger molecules diacylglycerol (DAG) and inositol 1,4,5-trisphosphate (IP3) is mediated by activated phosphatidylinositol-specific phospholipase C enzymes. The protein is Phosphoinositide phospholipase C 3 (PLC3) of Arabidopsis thaliana (Mouse-ear cress).